Here is a 471-residue protein sequence, read N- to C-terminus: MTTLTEVLDYKVADLSLAEWGRKEIDVAEKEMPGLMATRRKYAGQYPLKGARIAGSLHMTIQTAVLIETLVELGAEVRWASCNIFSTQDHAAAAIAKSGVPVFAWKGETLEEYWWCTRQILEFEGGKGPNLIVDDGGDATLMIILGYKIENNPELLEKAPANLEEKALYQQFREVFAEDSQRWHKVAAEMKGVSEETTTGVHRLYQMMEKGELLFPAINVNDSVTKSKFDNLYGCRESLADGIKRATDVMVAGKVVVVLGYGDVGKGSARSMRAYGARVIVTEIDPICALQAAMEGYEVSTMDEAVKEGNIFVTTTGNKDVITLEHMKQMKDEAIVCNIGHFDNEIQVEQLYAYAGATRLNIKPQVDKYTFENGNCIYLLAEGRLVNLGCATGHPSFVMSNSFTNQTLAQIELWTKDYAVGVYRLPKELDEEVARLHLEQLGVKLTRLSDEQAAYIGVPLDGPYKPEHYRY.

The substrate site is built by Thr60, Asp135, and Glu196. 197-199 (TTT) lines the NAD(+) pocket. Positions 226 and 230 each coordinate substrate. NAD(+)-binding positions include Asn231, 260–265 (GYGDVG), Glu283, Asn318, 339–341 (IGH), and Asn387.

The protein belongs to the adenosylhomocysteinase family. It depends on NAD(+) as a cofactor.

It localises to the cytoplasm. It catalyses the reaction S-adenosyl-L-homocysteine + H2O = L-homocysteine + adenosine. It functions in the pathway amino-acid biosynthesis; L-homocysteine biosynthesis; L-homocysteine from S-adenosyl-L-homocysteine: step 1/1. Its function is as follows. May play a key role in the regulation of the intracellular concentration of adenosylhomocysteine. The chain is Adenosylhomocysteinase from Pelodictyon phaeoclathratiforme (strain DSM 5477 / BU-1).